The primary structure comprises 205 residues: Thiamine-phosphate synthase (205 aa).

4-amino-2-methyl-5-(diphosphooxymethyl)pyrimidine-binding positions include 34–38 (QLRCK) and Asn66. Mg(2+) contacts are provided by Asp67 and Asp86. Ser105 is a binding site for 4-amino-2-methyl-5-(diphosphooxymethyl)pyrimidine. 131–133 (TTT) is a binding site for 2-[(2R,5Z)-2-carboxy-4-methylthiazol-5(2H)-ylidene]ethyl phosphate. Lys134 contacts 4-amino-2-methyl-5-(diphosphooxymethyl)pyrimidine. Gly163 provides a ligand contact to 2-[(2R,5Z)-2-carboxy-4-methylthiazol-5(2H)-ylidene]ethyl phosphate.

The protein belongs to the thiamine-phosphate synthase family. It depends on Mg(2+) as a cofactor.

It catalyses the reaction 2-[(2R,5Z)-2-carboxy-4-methylthiazol-5(2H)-ylidene]ethyl phosphate + 4-amino-2-methyl-5-(diphosphooxymethyl)pyrimidine + 2 H(+) = thiamine phosphate + CO2 + diphosphate. The catalysed reaction is 2-(2-carboxy-4-methylthiazol-5-yl)ethyl phosphate + 4-amino-2-methyl-5-(diphosphooxymethyl)pyrimidine + 2 H(+) = thiamine phosphate + CO2 + diphosphate. The enzyme catalyses 4-methyl-5-(2-phosphooxyethyl)-thiazole + 4-amino-2-methyl-5-(diphosphooxymethyl)pyrimidine + H(+) = thiamine phosphate + diphosphate. It functions in the pathway cofactor biosynthesis; thiamine diphosphate biosynthesis; thiamine phosphate from 4-amino-2-methyl-5-diphosphomethylpyrimidine and 4-methyl-5-(2-phosphoethyl)-thiazole: step 1/1. In terms of biological role, condenses 4-methyl-5-(beta-hydroxyethyl)thiazole monophosphate (THZ-P) and 2-methyl-4-amino-5-hydroxymethyl pyrimidine pyrophosphate (HMP-PP) to form thiamine monophosphate (TMP). This is Thiamine-phosphate synthase from Neisseria meningitidis serogroup B (strain ATCC BAA-335 / MC58).